Here is a 186-residue protein sequence, read N- to C-terminus: Cell division protein SepF (186 aa).

The interval 24–91 (EDEEEEERYA…HNPPHLRAVP (68 aa)) is disordered.

Belongs to the SepF family. In terms of assembly, homodimer. Interacts with FtsZ.

The protein resides in the cytoplasm. Functionally, cell division protein that is part of the divisome complex and is recruited early to the Z-ring. Probably stimulates Z-ring formation, perhaps through the cross-linking of FtsZ protofilaments. Its function overlaps with FtsA. The sequence is that of Cell division protein SepF from Rubrobacter xylanophilus (strain DSM 9941 / JCM 11954 / NBRC 16129 / PRD-1).